Reading from the N-terminus, the 149-residue chain is FAD synthase (149 aa).

Residues 10 to 11, 15 to 18, aspartate 95, and tyrosine 123 each bind ATP; these read TF and HPGH.

This sequence belongs to the archaeal FAD synthase family. In terms of assembly, homodimer. Co(2+) is required as a cofactor.

It carries out the reaction FMN + ATP + H(+) = FAD + diphosphate. The protein operates within cofactor biosynthesis; FAD biosynthesis; FAD from FMN: step 1/1. With respect to regulation, is inhibited by the product PPi. Its function is as follows. Catalyzes the transfer of the AMP portion of ATP to flavin mononucleotide (FMN) to produce flavin adenine dinucleotide (FAD) coenzyme. To a lesser extent, is also able to utilize other nucleotides such as CTP and GTP as substrates, producing the modified coenzymes, flavin cytosine dinucleotide (FCD) and flavin guanine dinucleotide (FGD), respectively. Does not catalyze the reverse reaction to produce FMN and ATP from FAD and PPi. Does not function as a glycerol-3-phosphate cytidylyltransferase, as previously annotated in the complete genome. This is FAD synthase (ribL) from Methanocaldococcus jannaschii (strain ATCC 43067 / DSM 2661 / JAL-1 / JCM 10045 / NBRC 100440) (Methanococcus jannaschii).